Consider the following 84-residue polypeptide: Small ribosomal subunit protein eS27 (84 aa).

Over residues 1 to 16 (MPLAKDPLHPSPEEEK) the composition is skewed to basic and acidic residues. Residues 1-25 (MPLAKDPLHPSPEEEKRKHKKKRLV) are disordered. Ser-11 carries the post-translational modification Phosphoserine. The C4-type zinc-finger motif lies at 38 to 60 (PGCYKITTVFSHAQTVVLCVGCS).

The protein belongs to the eukaryotic ribosomal protein eS27 family. Component of the small ribosomal subunit. Part of the small subunit (SSU) processome, composed of more than 70 proteins and the RNA chaperone small nucleolar RNA (snoRNA) U3. The cofactor is Zn(2+).

Its subcellular location is the cytoplasm. The protein localises to the nucleus. It localises to the nucleolus. In terms of biological role, component of the small ribosomal subunit. The ribosome is a large ribonucleoprotein complex responsible for the synthesis of proteins in the cell. Required for proper rRNA processing and maturation of 18S rRNAs. Part of the small subunit (SSU) processome, first precursor of the small eukaryotic ribosomal subunit. During the assembly of the SSU processome in the nucleolus, many ribosome biogenesis factors, an RNA chaperone and ribosomal proteins associate with the nascent pre-rRNA and work in concert to generate RNA folding, modifications, rearrangements and cleavage as well as targeted degradation of pre-ribosomal RNA by the RNA exosome. The polypeptide is Small ribosomal subunit protein eS27 (RPS27) (Pongo abelii (Sumatran orangutan)).